The primary structure comprises 1046 residues: Protein HBT1 (1046 aa).

Disordered stretches follow at residues 1–455, 469–894, and 908–1046; these read MNMN…AAEK, DYQQ…LGGA, and PSLI…RSEI. S41 is subject to Phosphoserine. Positions 81-96 are enriched in basic and acidic residues; that stretch reads KDSETPHEDTEADANR. Composition is skewed to polar residues over residues 98–149, 175–191, and 228–301; these read ANVT…SPPT, IATTHNHSTSKAATSPV, and ANTG…NTDS. The residue at position 303 (S303) is a Phosphoserine. Positions 327 to 341 are enriched in polar residues; sequence VYTSTGPKSNVSSGM. Residue S363 is modified to Phosphoserine. Composition is skewed to polar residues over residues 389–408 and 420–429; these read QTGLKNDQVSGSDAIQQQTM and GFVSQQPSYH. Residues 430–455 are compositionally biased toward basic and acidic residues; it reads DSNKNIQHPEKNKVDNKNISERAAEK. Polar residues predominate over residues 488–498; sequence YSSSAGKNKNL. The residue at position 491 (S491) is a Phosphoserine. The span at 529 to 538 shows a compositional bias: basic and acidic residues; sequence GHMKYNDNGR. Residues 548 to 559 are compositionally biased toward polar residues; the sequence is QAGSQNTNNNID. A Phosphoserine modification is found at S561. Residues 570–582 are compositionally biased toward polar residues; the sequence is GLSNDATTRNNVV. A compositionally biased stretch (basic and acidic residues) spans 586-597; sequence MKDEDMNEDSTK. Residues 605 to 619 show a composition bias toward acidic residues; sequence YLDDVEDYHENDIDD. The span at 621–630 shows a compositional bias: basic and acidic residues; that stretch reads SNAKKNDLYS. Position 671 is a phosphoserine (S671). The segment covering 742-756 has biased composition (polar residues); the sequence is FTNNPETGTTGNVDT. Positions 773–782 are enriched in basic and acidic residues; sequence DDSKNTDTHL. 2 stretches are compositionally biased toward polar residues: residues 792–802 and 837–855; these read NSRSGDTTYSK and SSEQKASYGSGGNSQNQEY. Y855 carries the phosphotyrosine modification. S857 carries the phosphoserine modification. Residues 868–890 are compositionally biased toward basic and acidic residues; it reads KVLEEDAPGYKREVDLKNKRRTD. Residues 922–951 show a composition bias toward polar residues; sequence DTNTSSSQKPSEGTYPETTSYSIHNETTSQ. Over residues 952-963 the composition is skewed to low complexity; it reads GRKVSVGSMGSG. Positions 964 to 976 are enriched in basic residues; the sequence is KSKHHHNHHRHSR. S1005 carries the phosphoserine modification. The segment covering 1006–1019 has biased composition (acidic residues); that stretch reads DEGEQDYHDDEQGE. Phosphoserine is present on S1034.

In terms of assembly, conjugated with HUB1. HUB1 has not the classical C-terminal Gly residue, so it is still unknown how conjugation may occur.

The protein localises to the cytoplasm. In terms of biological role, polarity-determining protein which forms a conjugate with the ubiquitin-like modifier HUB1. Involved in bud site selection and cellular morphogenesis during conjugation. Required for survival during stationary phase. The sequence is that of Protein HBT1 (HBT1) from Saccharomyces cerevisiae (strain ATCC 204508 / S288c) (Baker's yeast).